The primary structure comprises 212 residues: Deoxyribose-phosphate aldolase (212 aa).

D89 functions as the Proton donor/acceptor in the catalytic mechanism. The Schiff-base intermediate with acetaldehyde role is filled by K151. K180 serves as the catalytic Proton donor/acceptor.

The protein belongs to the DeoC/FbaB aldolase family. DeoC type 1 subfamily.

The protein resides in the cytoplasm. The catalysed reaction is 2-deoxy-D-ribose 5-phosphate = D-glyceraldehyde 3-phosphate + acetaldehyde. The protein operates within carbohydrate degradation; 2-deoxy-D-ribose 1-phosphate degradation; D-glyceraldehyde 3-phosphate and acetaldehyde from 2-deoxy-alpha-D-ribose 1-phosphate: step 2/2. In terms of biological role, catalyzes a reversible aldol reaction between acetaldehyde and D-glyceraldehyde 3-phosphate to generate 2-deoxy-D-ribose 5-phosphate. The sequence is that of Deoxyribose-phosphate aldolase from Clostridium botulinum (strain Langeland / NCTC 10281 / Type F).